The primary structure comprises 158 residues: Style cell-cycle inhibitor 1-B (158 aa).

Composition is skewed to basic and acidic residues over residues 1 to 11 (MGSDKKTTEEK) and 22 to 47 (PRDEVKSKRQNIKGDEERRKEKDKSK). Residues 1 to 88 (MGSDKKTTEE…DKSKNKFEEL (88 aa)) form a disordered region. 2 stretches are compositionally biased toward basic residues: residues 48-58 (KEKHKSHKSKC) and 67-81 (GEKHKTKSHKHKDKS).

Specifically expressed in flowers pistils, especially in stigmas and styles. Barely detected in roots, stems, leaves, sepals, petals and stamen.

It localises to the nucleus. In terms of biological role, component of the auxin signaling transduction pathway that regulates cell proliferation and differentiation during flowers stigmas and styles development. Involved in the regulation of auxin-related genes. The sequence is that of Style cell-cycle inhibitor 1-B from Nicotiana tabacum (Common tobacco).